We begin with the raw amino-acid sequence, 733 residues long: DNA-binding protein SATB2 (733 aa).

Residues 1 to 47 (MERRSESPCLRDSPDRRSGSPDVKGPPPVKVARLEQNGSPMGARGRP) are disordered. S20 carries the phosphoserine modification. Glycyl lysine isopeptide (Lys-Gly) (interchain with G-Cter in SUMO2) cross-links involve residues K24 and K30. S39 is modified (phosphoserine). In terms of domain architecture, CMP spans 57-158 (GLMIPVFCVV…VVTLKIQLQS (102 aa)). Residue K161 forms a Glycyl lysine isopeptide (Lys-Gly) (interchain with G-Cter in SUMO2) linkage. The CUTL domain occupies 161–234 (KLEDLPAEQW…WYKKYKKIKV (74 aa)). A Glycyl lysine isopeptide (Lys-Gly) (interchain with G-Cter in SUMO) cross-link involves residue K233. A Glycyl lysine isopeptide (Lys-Gly) (interchain with G-Cter in SUMO); alternate cross-link involves residue K350. Residue K350 forms a Glycyl lysine isopeptide (Lys-Gly) (interchain with G-Cter in SUMO2); alternate linkage. The CUT 1 DNA-binding region spans 350–437 (KPEPTNSSVE…ERDRIYQDER (88 aa)). Positions 435-473 (DERERSMNPNVSMVSSASSSPSSSRTPQAKTSTPTTDLP) are disordered. The span at 441-458 (MNPNVSMVSSASSSPSSS) shows a compositional bias: low complexity. Position 454 is a phosphoserine (S454). The segment covering 459 to 470 (RTPQAKTSTPTT) has biased composition (polar residues). At T467 the chain carries Phosphothreonine. A DNA-binding region (CUT 2) is located at residues 473–560 (PIKVDGANVN…ERDVIYEEES (88 aa)). K475 is covalently cross-linked (Glycyl lysine isopeptide (Lys-Gly) (interchain with G-Cter in SUMO2)). 2 disordered regions span residues 580–617 (QVLHRQQSQPTKESSPPREEAPPPPPPTEDSCAKKPRS) and 691–733 (DEEL…TDQR). S594 is modified (phosphoserine). The segment at residues 615-674 (PRSRTKISLEALGILQSFIHDVGLYPDQEAIHTLSAQLDLPKHTIIKFFQNQRYHVKHHG) is a DNA-binding region (homeobox). A compositionally biased stretch (acidic residues) spans 694 to 708 (LLTESEENDSEEGSE). The segment covering 709–733 (EMYKVEAEEENADKSKAAPAETDQR) has biased composition (basic and acidic residues). A Glycyl lysine isopeptide (Lys-Gly) (interchain with G-Cter in SUMO2) cross-link involves residue K724.

The protein belongs to the CUT homeobox family. As to quaternary structure, interacts with PIAS1. Interacts with ATF4 and RUNX2; resulting in enhanced DNA binding and transactivation by these transcription factors. Post-translationally, sumoylated by PIAS1. Sumoylation promotes nuclear localization, but represses transcription factor activity. In terms of tissue distribution, expressed in cortical neurons that extend axons across the corpus callosum. Also expressed in branchial arches and in cells of the osteoblast lineage, but not in chondrocytes and osteoclasts.

Its subcellular location is the nucleus matrix. In terms of biological role, binds to DNA, at nuclear matrix- or scaffold-associated regions. Thought to recognize the sugar-phosphate structure of double-stranded DNA. Transcription factor controlling nuclear gene expression, by binding to matrix attachment regions (MARs) of DNA and inducing a local chromatin-loop remodeling. Acts as a docking site for several chromatin remodeling enzymes and also by recruiting corepressors (HDACs) or coactivators (HATs) directly to promoters and enhancers. Required for the initiation of the upper-layer neurons (UL1) specific genetic program and for the inactivation of deep-layer neurons (DL) and UL2 specific genes, probably by modulating Bcl11b expression. Repressor of Ctip2 and regulatory determinant of corticocortical connections in the developing cerebral cortex. May play an important role in palate formation. Acts as a molecular node in a transcriptional network regulating skeletal development and osteoblast differentiation. The chain is DNA-binding protein SATB2 (Satb2) from Mus musculus (Mouse).